Consider the following 338-residue polypeptide: RNA 3'-terminal phosphate cyclase (338 aa).

Residues Gln103 and 283-287 each bind ATP; that span reads YLADQ. Catalysis depends on His308, which acts as the Tele-AMP-histidine intermediate.

This sequence belongs to the RNA 3'-terminal cyclase family. Type 1 subfamily.

It localises to the cytoplasm. It catalyses the reaction a 3'-end 3'-phospho-ribonucleotide-RNA + ATP = a 3'-end 2',3'-cyclophospho-ribonucleotide-RNA + AMP + diphosphate. Its function is as follows. Catalyzes the conversion of 3'-phosphate to a 2',3'-cyclic phosphodiester at the end of RNA. The mechanism of action of the enzyme occurs in 3 steps: (A) adenylation of the enzyme by ATP; (B) transfer of adenylate to an RNA-N3'P to produce RNA-N3'PP5'A; (C) and attack of the adjacent 2'-hydroxyl on the 3'-phosphorus in the diester linkage to produce the cyclic end product. The biological role of this enzyme is unknown but it is likely to function in some aspects of cellular RNA processing. The chain is RNA 3'-terminal phosphate cyclase from Escherichia coli (strain K12 / MC4100 / BW2952).